The chain runs to 345 residues: 3-isopropylmalate dehydrogenase (345 aa).

An NAD(+)-binding site is contributed by 74–87; the sequence is GPKWDGLPRKISPE. 4 residues coordinate substrate: Arg94, Arg104, Arg132, and Asp217. Mg(2+)-binding residues include Asp217, Asp241, and Asp245. Position 274–286 (274–286) interacts with NAD(+); that stretch reads GSAPDIAGKGIAN.

It belongs to the isocitrate and isopropylmalate dehydrogenases family. LeuB type 1 subfamily. As to quaternary structure, homodimer. The cofactor is Mg(2+). Mn(2+) serves as cofactor.

Its subcellular location is the cytoplasm. The enzyme catalyses (2R,3S)-3-isopropylmalate + NAD(+) = 4-methyl-2-oxopentanoate + CO2 + NADH. Its pathway is amino-acid biosynthesis; L-leucine biosynthesis; L-leucine from 3-methyl-2-oxobutanoate: step 3/4. Its function is as follows. Catalyzes the oxidation of 3-carboxy-2-hydroxy-4-methylpentanoate (3-isopropylmalate) to 3-carboxy-4-methyl-2-oxopentanoate. The product decarboxylates to 4-methyl-2 oxopentanoate. The chain is 3-isopropylmalate dehydrogenase (leuB) from Thermus thermophilus.